The primary structure comprises 968 residues: RNA polymerase-associated protein RapA (968 aa).

The 171-residue stretch at 164 to 334 (DVGRRHAPRV…FARLRLLDPN (171 aa)) folds into the Helicase ATP-binding domain. 177-184 (DEVGLGKT) contributes to the ATP binding site. A DEAH box motif is present at residues 280–283 (DEAH). Residues 490 to 662 (RVEWLMGYLT…YLASPDQTEG (173 aa)) enclose the Helicase C-terminal domain.

The protein belongs to the SNF2/RAD54 helicase family. RapA subfamily. Interacts with the RNAP. Has a higher affinity for the core RNAP than for the holoenzyme. Its ATPase activity is stimulated by binding to RNAP.

Its function is as follows. Transcription regulator that activates transcription by stimulating RNA polymerase (RNAP) recycling in case of stress conditions such as supercoiled DNA or high salt concentrations. Probably acts by releasing the RNAP, when it is trapped or immobilized on tightly supercoiled DNA. Does not activate transcription on linear DNA. Probably not involved in DNA repair. The chain is RNA polymerase-associated protein RapA from Shigella flexneri serotype 5b (strain 8401).